The chain runs to 175 residues: Large ribosomal subunit protein uL10 (175 aa).

The protein belongs to the universal ribosomal protein uL10 family. In terms of assembly, part of the ribosomal stalk of the 50S ribosomal subunit. The N-terminus interacts with L11 and the large rRNA to form the base of the stalk. The C-terminus forms an elongated spine to which L12 dimers bind in a sequential fashion forming a multimeric L10(L12)X complex.

Forms part of the ribosomal stalk, playing a central role in the interaction of the ribosome with GTP-bound translation factors. This chain is Large ribosomal subunit protein uL10, found in Prochlorococcus marinus (strain NATL2A).